The chain runs to 203 residues: Large ribosomal subunit protein uL13 (203 aa).

Ala-2 is subject to N-acetylalanine. Residue Arg-59 is modified to Citrulline. The residue at position 77 (Ser-77) is a Phosphoserine; by ZIPK/DAPK3. Arg-140 carries the post-translational modification Citrulline. Lys-191 is subject to N6-acetyllysine.

Belongs to the universal ribosomal protein uL13 family. Component of the 60S ribosome. Component of the GAIT complex. Interacts with EIF4G1. Phosphorylation at Ser-77 upon interferon-gamma treatment in monocytes involves a DAPK1-DAPK3 kinase cascade and is causing release from the ribosome, association with the GAIT complex and subsequent involvement in transcript-selective translation inhibition. In terms of processing, citrullinated by PADI4.

The protein localises to the cytoplasm. Its function is as follows. Associated with ribosomes but is not required for canonical ribosome function and has extra-ribosomal functions. Component of the GAIT (gamma interferon-activated inhibitor of translation) complex which mediates interferon-gamma-induced transcript-selective translation inhibition in inflammation processes. Upon interferon-gamma activation and subsequent phosphorylation dissociates from the ribosome and assembles into the GAIT complex which binds to stem loop-containing GAIT elements in the 3'-UTR of diverse inflammatory mRNAs (such as ceruplasmin) and suppresses their translation. In the GAIT complex interacts with m7G cap-bound eIF4G at or near the eIF3-binding site and blocks the recruitment of the 43S ribosomal complex. Involved in methylation of rRNA. The polypeptide is Large ribosomal subunit protein uL13 (RPL13A) (Homo sapiens (Human)).